The sequence spans 311 residues: Acetyl-coenzyme A carboxylase carboxyl transferase subunit alpha (311 aa).

In terms of domain architecture, CoA carboxyltransferase C-terminal spans 36-286 (NLEKEVAKVY…ASYFVSKLEK (251 aa)).

It belongs to the AccA family. In terms of assembly, acetyl-CoA carboxylase is a heterohexamer composed of biotin carboxyl carrier protein (AccB), biotin carboxylase (AccC) and two subunits each of ACCase subunit alpha (AccA) and ACCase subunit beta (AccD).

The protein localises to the cytoplasm. The catalysed reaction is N(6)-carboxybiotinyl-L-lysyl-[protein] + acetyl-CoA = N(6)-biotinyl-L-lysyl-[protein] + malonyl-CoA. The protein operates within lipid metabolism; malonyl-CoA biosynthesis; malonyl-CoA from acetyl-CoA: step 1/1. In terms of biological role, component of the acetyl coenzyme A carboxylase (ACC) complex. First, biotin carboxylase catalyzes the carboxylation of biotin on its carrier protein (BCCP) and then the CO(2) group is transferred by the carboxyltransferase to acetyl-CoA to form malonyl-CoA. The polypeptide is Acetyl-coenzyme A carboxylase carboxyl transferase subunit alpha (Campylobacter curvus (strain 525.92)).